The sequence spans 930 residues: Bifunctional uridylyltransferase/uridylyl-removing enzyme (930 aa).

The uridylyltransferase stretch occupies residues 1-387 (MAPASEAGPA…IMGLFRRKKR (387 aa)). A uridylyl-removing region spans residues 388–741 (LKPEYSLVNG…LDPDPDRDAT (354 aa)). The region spanning 504–626 (VDEHTIQCIS…VRSKKRLDLL (123 aa)) is the HD domain. 2 consecutive ACT domains span residues 742–818 (RACF…VVAR) and 852–927 (IIEV…GAER).

Belongs to the GlnD family. The cofactor is Mg(2+).

It catalyses the reaction [protein-PII]-L-tyrosine + UTP = [protein-PII]-uridylyl-L-tyrosine + diphosphate. The catalysed reaction is [protein-PII]-uridylyl-L-tyrosine + H2O = [protein-PII]-L-tyrosine + UMP + H(+). With respect to regulation, uridylyltransferase (UTase) activity is inhibited by glutamine, while glutamine activates uridylyl-removing (UR) activity. Functionally, modifies, by uridylylation and deuridylylation, the PII regulatory proteins (GlnB and homologs), in response to the nitrogen status of the cell that GlnD senses through the glutamine level. Under low glutamine levels, catalyzes the conversion of the PII proteins and UTP to PII-UMP and PPi, while under higher glutamine levels, GlnD hydrolyzes PII-UMP to PII and UMP (deuridylylation). Thus, controls uridylylation state and activity of the PII proteins, and plays an important role in the regulation of nitrogen fixation and metabolism. This is Bifunctional uridylyltransferase/uridylyl-removing enzyme from Cereibacter sphaeroides (strain ATCC 17023 / DSM 158 / JCM 6121 / CCUG 31486 / LMG 2827 / NBRC 12203 / NCIMB 8253 / ATH 2.4.1.) (Rhodobacter sphaeroides).